The following is a 386-amino-acid chain: S-adenosylmethionine synthase (386 aa).

Glu8 is a binding site for Mg(2+). Residue His14 participates in ATP binding. Residue Glu42 coordinates K(+). Residues Glu55 and Gln98 each coordinate L-methionine. Residues 166 to 168 (DGK), 234 to 237 (SGRF), Asp245, 251 to 252 (RK), Ala268, Lys272, and Lys276 each bind ATP. Asp245 contributes to the L-methionine binding site. Lys276 lines the L-methionine pocket.

It belongs to the AdoMet synthase family. Homotetramer. The cofactor is Mn(2+). Requires Mg(2+) as cofactor. Co(2+) is required as a cofactor. It depends on K(+) as a cofactor.

It localises to the cytoplasm. It catalyses the reaction L-methionine + ATP + H2O = S-adenosyl-L-methionine + phosphate + diphosphate. Its pathway is amino-acid biosynthesis; S-adenosyl-L-methionine biosynthesis; S-adenosyl-L-methionine from L-methionine: step 1/1. Its function is as follows. Catalyzes the formation of S-adenosylmethionine from methionine and ATP. The reaction comprises two steps that are both catalyzed by the same enzyme: formation of S-adenosylmethionine (AdoMet) and triphosphate, and subsequent hydrolysis of the triphosphate. The protein is S-adenosylmethionine synthase (METK) of Ostreococcus tauri.